Here is a 147-residue protein sequence, read N- to C-terminus: Cytochrome c-type biogenesis protein CcmE 1 (147 aa).

The Cytoplasmic portion of the chain corresponds to 1–9; it reads MKSLKKQRR. The chain crosses the membrane as a helical; Signal-anchor for type II membrane protein span at residues 10–30; sequence IQVIILATVALVLATGLIGYA. At 31 to 147 the chain is on the periplasmic side; it reads MRDGINFFRA…EQGVYQAPES (117 aa). 2 residues coordinate heme: His123 and Tyr127.

Belongs to the CcmE/CycJ family.

It localises to the cell inner membrane. Its function is as follows. Heme chaperone required for the biogenesis of c-type cytochromes. Transiently binds heme delivered by CcmC and transfers the heme to apo-cytochromes in a process facilitated by CcmF and CcmH. This chain is Cytochrome c-type biogenesis protein CcmE 1, found in Ruegeria pomeroyi (strain ATCC 700808 / DSM 15171 / DSS-3) (Silicibacter pomeroyi).